The chain runs to 505 residues: Zinc metalloproteinase/disintegrin (505 aa).

The signal sequence occupies residues 1 to 20; the sequence is MIQVLLVIICLAAFPYQGTS. Positions 21-214 are excised as a propeptide; the sequence is IILESGNVND…PIKKASQSNL (194 aa). 2 tandem repeats follow at residues 153 to 179 and 180 to 206. The Peptidase M12B domain occupies 220-416; it reads RYIELVIVAD…QKPQCILNKP (197 aa). Positions 223 and 307 each coordinate Ca(2+). Zn(2+) is bound at residue His-356. The active site involves Glu-357. Zn(2+) is bound by residues His-360 and His-366. 2 disulfides stabilise this stretch: Cys-371/Cys-395 and Cys-373/Cys-378. Cys-411 and Asn-414 together coordinate Ca(2+). Positions 417-432 are excised as a propeptide; sequence LRTDTVSTPVSGNELL. Residues 424–505 form the Disintegrin domain; that stretch reads TPVSGNELLE…AGCPRNPFHA (82 aa). 6 cysteine pairs are disulfide-bonded: Cys-438–Cys-453, Cys-440–Cys-448, Cys-447–Cys-470, Cys-461–Cys-467, Cys-466–Cys-491, and Cys-479–Cys-498. The Cell attachment site motif lies at 483 to 485; that stretch reads RGD.

Belongs to the venom metalloproteinase (M12B) family. P-II subfamily. P-IIa sub-subfamily. Monomer. Zn(2+) is required as a cofactor. As to expression, expressed by the venom gland.

It is found in the secreted. Its function is as follows. Impairs hemostasis in the envenomed animal. Inhibits platelet aggregation induced by ADP, thrombin, platelet-activating factor and collagen. Acts by inhibiting fibrinogen interaction with platelet receptors GPIIb/GPIIIa (ITGA2B/ITGB3). The protein is Zinc metalloproteinase/disintegrin of Gloydius brevicauda (Korean slamosa snake).